Reading from the N-terminus, the 378-residue chain is Fructose-1,6-bisphosphatase class 1 2 (378 aa).

Mg(2+) is bound by residues E98, D120, L122, and D123. Substrate-binding positions include 123-126 (DGSS) and N227. E299 provides a ligand contact to Mg(2+).

Belongs to the FBPase class 1 family. As to quaternary structure, homotetramer. The cofactor is Mg(2+).

Its subcellular location is the cytoplasm. The enzyme catalyses beta-D-fructose 1,6-bisphosphate + H2O = beta-D-fructose 6-phosphate + phosphate. Its pathway is carbohydrate biosynthesis; gluconeogenesis. The polypeptide is Fructose-1,6-bisphosphatase class 1 2 (Paraburkholderia xenovorans (strain LB400)).